The following is a 77-amino-acid chain: DinI-like protein in retron Ec67 (77 aa).

The protein belongs to the DinI family.

The polypeptide is DinI-like protein in retron Ec67 (Escherichia coli).